Here is a 575-residue protein sequence, read N- to C-terminus: Transcription factor collier (575 aa).

The segment at 79–82 is interaction with DNA; sequence RKSN. Residues 167 to 186 form a C5-type zinc finger; it reads CRVLLTHEVMCSRCCDKKSC. Interaction with DNA regions lie at residues 213-220 and 252-255; these read NCLKNAGN and NNSK. The tract at residues 255–278 is disordered; the sequence is KHGRRAKRLDTTEGTGNTSLSISG. Residues 266-276 are compositionally biased toward polar residues; sequence TEGTGNTSLSI. An IPT/TIG domain is found at 299-382; sequence PCIKAISPSE…KGSPGRFVYV (84 aa). Disordered regions lie at residues 456 to 492 and 546 to 575; these read GQWT…GSYG and AATA…AAAV. Residues 479 to 492 show a composition bias toward low complexity; that stretch reads SSASTPHSSGGSYG. Residues 546 to 557 show a composition bias toward basic residues; the sequence is AATAHPHHHYPH. Residues 561–575 show a composition bias toward low complexity; it reads PWHNPAVSAATAAAV.

Belongs to the COE family. As to expression, its expression at the blastoderm stage is restricted to a single stripe of cells corresponding to part of the intercalary and mandibular segment primordia, possibly parasegment O.

It is found in the nucleus. In terms of biological role, may act as a 'second-level regulator' of head patterning. Required for establishment of the PS(-1)/PS0 parasegmental border and formation of the intercalary segment. Required for expression of the segment polarity genes hedgehog, engrailed and wingless, and the segment-identity genes CAP and collar in the intercalary segment. Required at the onset of the gastrulation for the correct formation of the mandibular segment. The protein is Transcription factor collier (kn) of Drosophila melanogaster (Fruit fly).